Consider the following 102-residue polypeptide: Large ribosomal subunit protein bL21 (102 aa).

This sequence belongs to the bacterial ribosomal protein bL21 family. As to quaternary structure, part of the 50S ribosomal subunit. Contacts protein L20.

Functionally, this protein binds to 23S rRNA in the presence of protein L20. This chain is Large ribosomal subunit protein bL21, found in Macrococcus caseolyticus (strain JCSC5402) (Macrococcoides caseolyticum).